The sequence spans 94 residues: Large ribosomal subunit protein eL43B (94 aa).

Residues 39–62 (CPFCGRLTVKRTAAGIWKCSGKGC) form a C4-type zinc finger.

Belongs to the eukaryotic ribosomal protein eL43 family. As to quaternary structure, component of the large ribosomal subunit (LSU). Mature yeast ribosomes consist of a small (40S) and a large (60S) subunit. The 40S small subunit contains 1 molecule of ribosomal RNA (18S rRNA) and at least 33 different proteins. The large 60S subunit contains 3 rRNA molecules (25S, 5.8S and 5S rRNA) and at least 46 different proteins.

Its subcellular location is the cytoplasm. Its function is as follows. Component of the ribosome, a large ribonucleoprotein complex responsible for the synthesis of proteins in the cell. The small ribosomal subunit (SSU) binds messenger RNAs (mRNAs) and translates the encoded message by selecting cognate aminoacyl-transfer RNA (tRNA) molecules. The large subunit (LSU) contains the ribosomal catalytic site termed the peptidyl transferase center (PTC), which catalyzes the formation of peptide bonds, thereby polymerizing the amino acids delivered by tRNAs into a polypeptide chain. The nascent polypeptides leave the ribosome through a tunnel in the LSU and interact with protein factors that function in enzymatic processing, targeting, and the membrane insertion of nascent chains at the exit of the ribosomal tunnel. The chain is Large ribosomal subunit protein eL43B (rpl4302) from Schizosaccharomyces pombe (strain 972 / ATCC 24843) (Fission yeast).